A 238-amino-acid chain; its full sequence is Survival of motor neuron-related-splicing factor 30 (238 aa).

Residues 72-132 (SWKVGDKCMA…KPVEEGRKAK (61 aa)) form the Tudor domain. A Nuclear localization signal motif is present at residues 142–160 (KKEMIAQQREYKKKKALKK). Position 201 is a phosphoserine (Ser-201). Lys-219 is subject to N6-acetyllysine.

This sequence belongs to the SMN family. Associates with spliceosomes. Associates with U4/U5/U6 tri-snRNP and with U2 snRNP. Interacts (via Tudor domain) with SNRPD3 (via C-terminus); the interaction is direct. In terms of tissue distribution, detected at intermediate levels in skeletal muscle, and at low levels in heart and pancreas.

The protein localises to the nucleus speckle. It localises to the nucleus. It is found in the cajal body. In terms of biological role, involved in spliceosome assembly. This is Survival of motor neuron-related-splicing factor 30 (SMNDC1) from Homo sapiens (Human).